The primary structure comprises 502 residues: Probable cytosol aminopeptidase (502 aa).

2 residues coordinate Mn(2+): Lys275 and Asp280. Lys287 is a catalytic residue. Positions 298, 357, and 359 each coordinate Mn(2+). Arg361 is an active-site residue.

This sequence belongs to the peptidase M17 family. Mn(2+) is required as a cofactor.

The protein localises to the cytoplasm. The catalysed reaction is Release of an N-terminal amino acid, Xaa-|-Yaa-, in which Xaa is preferably Leu, but may be other amino acids including Pro although not Arg or Lys, and Yaa may be Pro. Amino acid amides and methyl esters are also readily hydrolyzed, but rates on arylamides are exceedingly low.. It carries out the reaction Release of an N-terminal amino acid, preferentially leucine, but not glutamic or aspartic acids.. Its function is as follows. Presumably involved in the processing and regular turnover of intracellular proteins. Catalyzes the removal of unsubstituted N-terminal amino acids from various peptides. In Ralstonia pickettii (strain 12J), this protein is Probable cytosol aminopeptidase.